Consider the following 201-residue polypeptide: Methylated-DNA--protein-cysteine methyltransferase (201 aa).

Residues Y131, G132, and R146 each contribute to the DNA site. C163 serves as the catalytic Nucleophile; methyl group acceptor.

The protein belongs to the MGMT family.

It localises to the nucleus. The catalysed reaction is a 6-O-methyl-2'-deoxyguanosine in DNA + L-cysteinyl-[protein] = S-methyl-L-cysteinyl-[protein] + a 2'-deoxyguanosine in DNA. It carries out the reaction a 4-O-methyl-thymidine in DNA + L-cysteinyl-[protein] = a thymidine in DNA + S-methyl-L-cysteinyl-[protein]. Functionally, involved in the cellular defense against the biological effects of O6-methylguanine (O6-MeG) and O4-methylthymine (O4-MeT) in DNA. Repairs the methylated nucleobase in DNA by stoichiometrically transferring the methyl group to a cysteine residue in the enzyme. This is a suicide reaction: the enzyme is irreversibly inactivated. This Lodderomyces elongisporus (strain ATCC 11503 / CBS 2605 / JCM 1781 / NBRC 1676 / NRRL YB-4239) (Yeast) protein is Methylated-DNA--protein-cysteine methyltransferase (MGT1).